Here is a 292-residue protein sequence, read N- to C-terminus: Recombination-promoting nuclease RpnA (292 aa).

Belongs to the Rpn/YhgA-like nuclease family. It depends on Mg(2+) as a cofactor.

Its activity is regulated as follows. Inhibited by EDTA, Zn(2+) and by Mg(2+) plus Mn(2+); stimulated by Ca(2+) in the presence of Mg(2+). Its function is as follows. A low activity DNA endonuclease yielding 3'-hydroxyl ends, equally active on ss or dsDNA, not active on dsRNA. Shows no sequence specificity. Upon expression enhances RecA-independent DNA recombination 49-fold, concomitantly reducing viability by 88% and probably inducing DNA damage as measured by induction of the SOS repair response in RecA cells. RecA-independent DNA recombination leads to replacement of recipient genes with large segments of donor DNA rather than DNA addition to the donor strain; increased expression of RpnA leads to smaller replacement segments, suggesting this protein may play a role in generating crossover events. The sequence is that of Recombination-promoting nuclease RpnA from Escherichia coli (strain K12).